The sequence spans 135 residues: Large ribosomal subunit protein uL16c (135 aa).

This sequence belongs to the universal ribosomal protein uL16 family. As to quaternary structure, part of the 50S ribosomal subunit.

Its subcellular location is the plastid. The protein resides in the chloroplast. The sequence is that of Large ribosomal subunit protein uL16c from Panax ginseng (Korean ginseng).